A 470-amino-acid chain; its full sequence is Cysteine--tRNA ligase (470 aa).

A Zn(2+)-binding site is contributed by cysteine 31. A 'HIGH' region motif is present at residues proline 33–histidine 43. Cysteine 209, histidine 234, and glutamate 238 together coordinate Zn(2+). Residues lysine 266–serine 270 carry the 'KMSKS' region motif. Position 269 (lysine 269) interacts with ATP.

The protein belongs to the class-I aminoacyl-tRNA synthetase family. The cofactor is Zn(2+).

It localises to the cytoplasm. The catalysed reaction is tRNA(Cys) + L-cysteine + ATP = L-cysteinyl-tRNA(Cys) + AMP + diphosphate. In Saccharolobus solfataricus (strain ATCC 35092 / DSM 1617 / JCM 11322 / P2) (Sulfolobus solfataricus), this protein is Cysteine--tRNA ligase.